Consider the following 712-residue polypeptide: Aryl hydrocarbon receptor nuclear translocator 2 (712 aa).

The interval 36 to 73 is disordered; that stretch reads AGAMPARGGKRRSGMDFDDEDGEGPSKFSRENHSEIER. Arg-42 is subject to Omega-N-methylarginine. A compositionally biased stretch (basic and acidic residues) spans 63–73; it reads FSRENHSEIER. A bHLH domain is found at 63 to 116; that stretch reads FSRENHSEIERRRRNKMTQYITELSDMVPTCSALARKPDKLTILRMAVSHMKSM. PAS domains are found at residues 134–209 and 323–393; these read TEQE…MTGR and PVCM…VKLK. In terms of domain architecture, PAC spans 398–441; the sequence is SVMYRFRTKNREWLLIRTSSFTFQNPYSDEIEYVICTNTNVKQL. The disordered stretch occupies residues 573–712; sequence AWTGSRPPFP…DLGMFPPFSE (140 aa). Low complexity-rich tracts occupy residues 597–626 and 653–675; these read SSHP…AYPS and SQWQ…QPGQ.

In terms of assembly, efficient DNA binding requires dimerization with another bHLH protein. Heterodimer with NPAS4 or SIM1. Heterodimer with the aryl hydrocarbon receptor (AHR) or the SIM1 protein. Interacts with TACC3. In terms of tissue distribution, restricted to adult brain and kidney.

The protein resides in the nucleus. Functionally, transcription factor that plays a role in the development of the hypothalamo-pituitary axis, postnatal brain growth, and visual and renal function. Specifically recognizes the xenobiotic response element (XRE). The chain is Aryl hydrocarbon receptor nuclear translocator 2 (Arnt2) from Mus musculus (Mouse).